Reading from the N-terminus, the 345-residue chain is MDLLKELESLVPELERGLDQASSLTELEELRVAFLGRKGRLAQIMGRLPELSPEDRPRLGQAANGVKMALTERFEGRKTALEAASEAAALSRFDPTLPGRAPWRGSLHPDTLVMEEICSVFRGLGYDIVTGPEVEMDHYNFEALNMPAEHPARDMQDTLYVTESILMRTHTSPLQVRTMLARKPPVAIIAPGKVYRRDSDITHTPMFHQIEGLMVDKGVSMADLRGTLTSFLRNVFGGDTRVRFRPSFFPFTEPSAEVDISCCICGGKGHVGNEPCRVCKTTGWVEILGCGMVDPAVFTAVGYDPEEYTGFAFGLGVERVAMLKYGIGDLRMFFENDVRFLSQFS.

Glu-253 contributes to the Mg(2+) binding site.

Belongs to the class-II aminoacyl-tRNA synthetase family. Phe-tRNA synthetase alpha subunit type 1 subfamily. Tetramer of two alpha and two beta subunits. The cofactor is Mg(2+).

It localises to the cytoplasm. It carries out the reaction tRNA(Phe) + L-phenylalanine + ATP = L-phenylalanyl-tRNA(Phe) + AMP + diphosphate + H(+). The chain is Phenylalanine--tRNA ligase alpha subunit from Nitratidesulfovibrio vulgaris (strain DSM 19637 / Miyazaki F) (Desulfovibrio vulgaris).